Here is a 247-residue protein sequence, read N- to C-terminus: Carboxy-S-adenosyl-L-methionine synthase (247 aa).

S-adenosyl-L-methionine-binding positions include Tyr-39, 64 to 66 (GCS), 89 to 90 (DN), 117 to 118 (DI), Asn-132, and Arg-199.

Belongs to the class I-like SAM-binding methyltransferase superfamily. Cx-SAM synthase family. In terms of assembly, homodimer.

It carries out the reaction prephenate + S-adenosyl-L-methionine = carboxy-S-adenosyl-L-methionine + 3-phenylpyruvate + H2O. Catalyzes the conversion of S-adenosyl-L-methionine (SAM) to carboxy-S-adenosyl-L-methionine (Cx-SAM). The chain is Carboxy-S-adenosyl-L-methionine synthase from Cronobacter sakazakii (strain ATCC BAA-894) (Enterobacter sakazakii).